The primary structure comprises 406 residues: Enoyl-[acyl-carrier-protein] reductase [NADH] (406 aa).

NAD(+)-binding positions include 48 to 53, 74 to 75, 111 to 112, and 140 to 141; these read GASTGF, FE, DA, and IA. Tyrosine 226 is a binding site for substrate. The Proton donor role is filled by tyrosine 236. Residues lysine 245 and 275 to 277 contribute to the NAD(+) site; that span reads LVT.

Belongs to the TER reductase family. As to quaternary structure, monomer.

It carries out the reaction a 2,3-saturated acyl-[ACP] + NAD(+) = a (2E)-enoyl-[ACP] + NADH + H(+). It participates in lipid metabolism; fatty acid biosynthesis. In terms of biological role, involved in the final reduction of the elongation cycle of fatty acid synthesis (FAS II). Catalyzes the reduction of a carbon-carbon double bond in an enoyl moiety that is covalently linked to an acyl carrier protein (ACP). This chain is Enoyl-[acyl-carrier-protein] reductase [NADH], found in Coxiella burnetii (strain RSA 331 / Henzerling II).